Reading from the N-terminus, the 476-residue chain is Aspartyl/glutamyl-tRNA(Asn/Gln) amidotransferase subunit B (476 aa).

It belongs to the GatB/GatE family. GatB subfamily. In terms of assembly, heterotrimer of A, B and C subunits.

It carries out the reaction L-glutamyl-tRNA(Gln) + L-glutamine + ATP + H2O = L-glutaminyl-tRNA(Gln) + L-glutamate + ADP + phosphate + H(+). It catalyses the reaction L-aspartyl-tRNA(Asn) + L-glutamine + ATP + H2O = L-asparaginyl-tRNA(Asn) + L-glutamate + ADP + phosphate + 2 H(+). Allows the formation of correctly charged Asn-tRNA(Asn) or Gln-tRNA(Gln) through the transamidation of misacylated Asp-tRNA(Asn) or Glu-tRNA(Gln) in organisms which lack either or both of asparaginyl-tRNA or glutaminyl-tRNA synthetases. The reaction takes place in the presence of glutamine and ATP through an activated phospho-Asp-tRNA(Asn) or phospho-Glu-tRNA(Gln). The polypeptide is Aspartyl/glutamyl-tRNA(Asn/Gln) amidotransferase subunit B (Clostridium kluyveri (strain ATCC 8527 / DSM 555 / NBRC 12016 / NCIMB 10680 / K1)).